The sequence spans 107 residues: Anti-adapter protein IraM (107 aa).

Belongs to the IraM/RssC family.

The protein resides in the cytoplasm. Functionally, inhibits RpoS proteolysis by regulating RssB activity, thereby increasing the stability of the sigma stress factor RpoS during magnesium starvation. This is Anti-adapter protein IraM from Escherichia coli (strain K12 / MC4100 / BW2952).